A 279-amino-acid chain; its full sequence is uncharacterized protein (279 aa).

Residues 1–29 are compositionally biased toward low complexity; the sequence is MSSRYTSSYTPSSRYGSGWDYSSSYSSSR. Disordered regions lie at residues 1 to 111 and 137 to 233; these read MSSR…APRE and LTLA…AEAL. Positions 30–44 are enriched in basic and acidic residues; it reads TSRDRDTGSYRDRDY. Residues 45-59 show a composition bias toward low complexity; sequence SSTSYTSTRPRYSTY. A compositionally biased stretch (acidic residues) spans 142–153; sequence EPEESEEEEDDE. The segment covering 170 to 186 has biased composition (low complexity); that stretch reads ESSPVSSPVKEVSSAAS. Residues 189–205 show a composition bias toward polar residues; that stretch reads ANDNGNETENRTPSPTV. Residues 221 to 233 show a composition bias toward basic and acidic residues; that stretch reads SDVKKEGGDAEAL.

This is an uncharacterized protein from Caenorhabditis elegans.